The chain runs to 503 residues: Anthranilate synthase component 1 3 (503 aa).

L-tryptophan is bound at residue 269 to 271 (PYS). 304–305 (GT) provides a ligand contact to chorismate. Residue Glu-331 coordinates Mg(2+). Residues Tyr-419, Arg-439, 453 to 455 (GSG), and Gly-455 contribute to the chorismate site. Position 468 (Glu-468) interacts with Mg(2+).

This sequence belongs to the anthranilate synthase component I family. In terms of assembly, tetramer of two components I and two components II. The cofactor is Mg(2+).

It carries out the reaction chorismate + L-glutamine = anthranilate + pyruvate + L-glutamate + H(+). It participates in amino-acid biosynthesis; L-tryptophan biosynthesis; L-tryptophan from chorismate: step 1/5. This Haloarcula marismortui (strain ATCC 43049 / DSM 3752 / JCM 8966 / VKM B-1809) (Halobacterium marismortui) protein is Anthranilate synthase component 1 3 (trpE3).